The sequence spans 363 residues: Cobalt-precorrin-5B C(1)-methyltransferase (363 aa).

The protein belongs to the CbiD family.

The enzyme catalyses Co-precorrin-5B + S-adenosyl-L-methionine = Co-precorrin-6A + S-adenosyl-L-homocysteine. It participates in cofactor biosynthesis; adenosylcobalamin biosynthesis; cob(II)yrinate a,c-diamide from sirohydrochlorin (anaerobic route): step 6/10. Its function is as follows. Catalyzes the methylation of C-1 in cobalt-precorrin-5B to form cobalt-precorrin-6A. This Treponema denticola (strain ATCC 35405 / DSM 14222 / CIP 103919 / JCM 8153 / KCTC 15104) protein is Cobalt-precorrin-5B C(1)-methyltransferase.